A 354-amino-acid chain; its full sequence is uncharacterized protein (354 aa).

Positions 309 to 326 are enriched in polar residues; the sequence is VNSANSINTANTRSQTGG. A disordered region spans residues 309–333; that stretch reads VNSANSINTANTRSQTGGQDEEDFE. Residues 326–353 are a coiled coil; that stretch reads GQDEEDFEKKYKKYKNKYAKLKNQKTSN.

Its subcellular location is the virion. This is an uncharacterized protein from Acanthamoeba polyphaga (Amoeba).